A 130-amino-acid polypeptide reads, in one-letter code: Small ribosomal subunit protein uS8 (130 aa).

Belongs to the universal ribosomal protein uS8 family. Part of the 30S ribosomal subunit.

One of the primary rRNA binding proteins, it binds directly to 16S rRNA central domain where it helps coordinate assembly of the platform of the 30S subunit. The polypeptide is Small ribosomal subunit protein uS8 (rps8) (Methanocaldococcus jannaschii (strain ATCC 43067 / DSM 2661 / JAL-1 / JCM 10045 / NBRC 100440) (Methanococcus jannaschii)).